Consider the following 428-residue polypeptide: MKLITNKQGLVGAITVPGDKSMSHRSIMFGAIAEGKTVIRHFLRADDCLGTIKAFKALGVKIEETEEEIIVHGTGFDGLKQADGPLDIGNSGTTIRLMMGILAGRDFDTVILGDESIAKRPMNRVMLPLQQMGAKMHGKDGSEFAPITINGKQSLKRMEYHMPVASAQVKSAIIFAALQAEGETIIHEKEKTRDHTEHMIRQFGGEIEMDGLTIRVKGGQTFTGQEMTVPGDVSSAAFFIVAGLITPGSEIELTHVGLNPTRTGIFDVVEQMGGSLVVKDSSRSTGKLAGTVVVKTSDLKGTEIGGDIIPRLIDEIPVIALLATQAEGTTIIKDAAELKVKETNRIDAVATELNKMGADITPTEDGLIIRGKTPLHAANVTSYGDHRIGMMLQIAALLVEEGDVELERAEAVSVSYPTFFEDIRSLLK.

Lys-20, Ser-21, and Arg-25 together coordinate 3-phosphoshikimate. Lys-20 provides a ligand contact to phosphoenolpyruvate. Residues Gly-92 and Arg-120 each coordinate phosphoenolpyruvate. 4 residues coordinate 3-phosphoshikimate: Ser-166, Gln-168, Asp-314, and Lys-341. Residue Gln-168 participates in phosphoenolpyruvate binding. The Proton acceptor role is filled by Asp-314. Residues Arg-345 and Arg-387 each contribute to the phosphoenolpyruvate site.

Belongs to the EPSP synthase family. As to quaternary structure, monomer.

Its subcellular location is the cytoplasm. It catalyses the reaction 3-phosphoshikimate + phosphoenolpyruvate = 5-O-(1-carboxyvinyl)-3-phosphoshikimate + phosphate. Its pathway is metabolic intermediate biosynthesis; chorismate biosynthesis; chorismate from D-erythrose 4-phosphate and phosphoenolpyruvate: step 6/7. In terms of biological role, catalyzes the transfer of the enolpyruvyl moiety of phosphoenolpyruvate (PEP) to the 5-hydroxyl of shikimate-3-phosphate (S3P) to produce enolpyruvyl shikimate-3-phosphate and inorganic phosphate. This chain is 3-phosphoshikimate 1-carboxyvinyltransferase, found in Listeria monocytogenes serotype 4a (strain HCC23).